Here is a 630-residue protein sequence, read N- to C-terminus: Chaperone protein DnaK (630 aa).

Thr198 is modified (phosphothreonine; by autocatalysis). A disordered region spans residues 604–630 (AAAAPGEEAPKDDDVVDAEFSEVDDKK). Positions 617–630 (DVVDAEFSEVDDKK) are enriched in acidic residues.

It belongs to the heat shock protein 70 family.

Functionally, acts as a chaperone. This Rhizorhabdus wittichii (strain DSM 6014 / CCUG 31198 / JCM 15750 / NBRC 105917 / EY 4224 / RW1) (Sphingomonas wittichii) protein is Chaperone protein DnaK.